The chain runs to 438 residues: Ribosomal protein uS12 methylthiotransferase RimO (438 aa).

Residues 1 to 116 (MNVGFISLGC…IWKEIENLLD (116 aa)) form the MTTase N-terminal domain. Residues Cys10, Cys46, Cys79, Cys147, Cys151, and Cys154 each coordinate [4Fe-4S] cluster. The Radical SAM core domain occupies 133–363 (TTGSNMAYLK…MALQEKISRE (231 aa)). One can recognise a TRAM domain in the interval 366 to 435 (EQKVGNVYKV…DYDLFGELYT (70 aa)).

This sequence belongs to the methylthiotransferase family. RimO subfamily. Requires [4Fe-4S] cluster as cofactor.

The protein localises to the cytoplasm. The catalysed reaction is L-aspartate(89)-[ribosomal protein uS12]-hydrogen + (sulfur carrier)-SH + AH2 + 2 S-adenosyl-L-methionine = 3-methylsulfanyl-L-aspartate(89)-[ribosomal protein uS12]-hydrogen + (sulfur carrier)-H + 5'-deoxyadenosine + L-methionine + A + S-adenosyl-L-homocysteine + 2 H(+). Its function is as follows. Catalyzes the methylthiolation of an aspartic acid residue of ribosomal protein uS12. The chain is Ribosomal protein uS12 methylthiotransferase RimO from Alkaliphilus oremlandii (strain OhILAs) (Clostridium oremlandii (strain OhILAs)).